We begin with the raw amino-acid sequence, 861 residues long: DNA mismatch repair protein MutS (861 aa).

An ATP-binding site is contributed by 609 to 616 (GPNMAGKS).

Belongs to the DNA mismatch repair MutS family.

In terms of biological role, this protein is involved in the repair of mismatches in DNA. It is possible that it carries out the mismatch recognition step. This protein has a weak ATPase activity. The chain is DNA mismatch repair protein MutS from Borrelia hermsii (strain HS1 / DAH).